We begin with the raw amino-acid sequence, 444 residues long: MVKNHDPKNEMQDMLTPLDAEEAAKTKLRLDMREIPKSSIKPEHFHLMYLLEQHSPYFIDAELTELRDSFQIHYDINDNHTPFDNIKSFTKNEKLRYLLNIKNLEEVNRTRYTFVLAPDELFFTRDGLPIAKTRGLQNVVDPLPVSEAEFLTRYKALVICAFNEKQSFDALVEGNLELHKGTPFETKVIEAATLDLLTAFLDEQYQKQEQDYSQNYAYVRKVGHTVFKWVAIGMTTLSVLLIAFLAFLYFSVMKHNERIEKGYQAFVKEDYTQVLNTYDDLDGKKLDKEALYIYAKSYIQTNKQGLEKDKKENLLNNVTPNSNKDYLLYWMELGQGHLDEAINIATYLDDNDITKLALINKLNEIKNNGDLSNDKRSEETKKYNDKLQDILDKEKQVKDEKAKSEEEKAKAKDEKLKQQEENEKKQKEQAQKDKEKRQEAERKK.

Topologically, residues 1 to 229 are cytoplasmic; that stretch reads MVKNHDPKNE…RKVGHTVFKW (229 aa). Residues 230–250 form a helical membrane-spanning segment; that stretch reads VAIGMTTLSVLLIAFLAFLYF. Residues 251 to 444 are Extracellular-facing; it reads SVMKHNERIE…EKRQEAERKK (194 aa). The tract at residues 366 to 444 is disordered; sequence KNNGDLSNDK…EKRQEAERKK (79 aa). A compositionally biased stretch (basic and acidic residues) spans 372-444; the sequence is SNDKRSEETK…EKRQEAERKK (73 aa). A coiled-coil region spans residues 387 to 443; it reads LQDILDKEKQVKDEKAKSEEEKAKAKDEKLKQQEENEKKQKEQAQKDKEKRQEAERK.

It belongs to the EssB family.

The protein resides in the cell membrane. Functionally, component of the type VII secretion system (Ess). Required for the secretion of EsxA. The polypeptide is Type VII secretion system protein EssB (Staphylococcus aureus (strain MRSA252)).